The primary structure comprises 465 residues: Probable glucan endo-1,3-beta-glucosidase eglC (465 aa).

The first 19 residues, 1–19 (MFTKTQILALALSIASAEA), serve as a signal peptide directing secretion. The active-site Proton donor is the E128. N-linked (GlcNAc...) asparagine glycosylation is present at N183. The active-site Nucleophile is the E239. N-linked (GlcNAc...) asparagine glycosylation is present at N318. Composition is skewed to low complexity over residues 320-333 (SSAS…SAQS) and 380-438 (SPSA…ATPA). 2 disordered regions span residues 320-356 (SSAS…GHGG) and 380-440 (SPSA…PADF). Residue G442 is the site of GPI-anchor amidated glycine attachment. The propeptide at 443 to 465 (AGSRLSGSIFGAAMLVAALAVAL) is removed in mature form.

Belongs to the glycosyl hydrolase 17 family. In terms of processing, the GPI-anchor is attached to the protein in the endoplasmic reticulum and serves to target the protein to the cell surface. There, the glucosamine-inositol phospholipid moiety is cleaved off and the GPI-modified mannoprotein is covalently attached via its lipidless GPI glycan remnant to the 1,6-beta-glucan of the outer cell wall layer.

Its subcellular location is the cell membrane. The protein localises to the secreted. It is found in the cell wall. The enzyme catalyses Hydrolysis of (1-&gt;3)-beta-D-glucosidic linkages in (1-&gt;3)-beta-D-glucans.. Glucanases play a role in cell expansion during growth, in cell-cell fusion during mating, and in spore release during sporulation. This enzyme may be involved in beta-glucan degradation and also function biosynthetically as a transglycosylase. The polypeptide is Probable glucan endo-1,3-beta-glucosidase eglC (eglC) (Emericella nidulans (strain FGSC A4 / ATCC 38163 / CBS 112.46 / NRRL 194 / M139) (Aspergillus nidulans)).